We begin with the raw amino-acid sequence, 216 residues long: Octanoyltransferase (216 aa).

Positions 35 to 213 (NSNPDFIWIG…TIEEEFNFDF (179 aa)) constitute a BPL/LPL catalytic domain. Residues 77-84 (RGGEVTCH), 144-146 (SIG), and 157-159 (GFS) contribute to the substrate site. Cys-175 serves as the catalytic Acyl-thioester intermediate.

The protein belongs to the LipB family.

Its subcellular location is the cytoplasm. The enzyme catalyses octanoyl-[ACP] + L-lysyl-[protein] = N(6)-octanoyl-L-lysyl-[protein] + holo-[ACP] + H(+). Its pathway is protein modification; protein lipoylation via endogenous pathway; protein N(6)-(lipoyl)lysine from octanoyl-[acyl-carrier-protein]: step 1/2. Functionally, catalyzes the transfer of endogenously produced octanoic acid from octanoyl-acyl-carrier-protein onto the lipoyl domains of lipoate-dependent enzymes. Lipoyl-ACP can also act as a substrate although octanoyl-ACP is likely to be the physiological substrate. The chain is Octanoyltransferase from Prochlorococcus marinus (strain MIT 9301).